Here is a 69-residue protein sequence, read N- to C-terminus: Conotoxin Lt5.10 (69 aa).

An N-terminal signal peptide occupies residues 1 to 19 (MLCLPVFIILLLLASPAAP). The propeptide occupies 20–54 (KSLETRIQNDLIRAGLTDADLKTEKGFLSGLLNVA).

Belongs to the conotoxin T superfamily. Contains 2 disulfide bonds that can be either 'C1-C3, C2-C4' or 'C1-C4, C2-C3', since these disulfide connectivities have been observed for conotoxins with cysteine framework V (for examples, see AC P0DQQ7 and AC P81755). In terms of tissue distribution, expressed by the venom duct.

Its subcellular location is the secreted. This is Conotoxin Lt5.10 from Conus litteratus (Lettered cone).